The sequence spans 249 residues: DNA repair protein RecO (249 aa).

Belongs to the RecO family.

In terms of biological role, involved in DNA repair and RecF pathway recombination. The polypeptide is DNA repair protein RecO (Rhodopseudomonas palustris (strain BisB5)).